The chain runs to 382 residues: Putative glutamate--cysteine ligase 2-1 (382 aa).

Belongs to the glutamate--cysteine ligase type 2 family. YbdK subfamily.

It catalyses the reaction L-cysteine + L-glutamate + ATP = gamma-L-glutamyl-L-cysteine + ADP + phosphate + H(+). Functionally, ATP-dependent carboxylate-amine ligase which exhibits weak glutamate--cysteine ligase activity. The chain is Putative glutamate--cysteine ligase 2-1 from Nocardioides sp. (strain ATCC BAA-499 / JS614).